We begin with the raw amino-acid sequence, 255 residues long: Phosphate import ATP-binding protein PstB (255 aa).

The ABC transporter domain maps to 10-250 (INIKDLNLWY…PQMKSTEDYI (241 aa)). 42–49 (GPSGCGKS) contacts ATP.

Belongs to the ABC transporter superfamily. Phosphate importer (TC 3.A.1.7) family. In terms of assembly, the complex is composed of two ATP-binding proteins (PstB), two transmembrane proteins (PstC and PstA) and a solute-binding protein (PstS).

It localises to the cell membrane. The enzyme catalyses phosphate(out) + ATP + H2O = ADP + 2 phosphate(in) + H(+). Its function is as follows. Part of the ABC transporter complex PstSACB involved in phosphate import. Responsible for energy coupling to the transport system. This chain is Phosphate import ATP-binding protein PstB, found in Methanococcoides burtonii (strain DSM 6242 / NBRC 107633 / OCM 468 / ACE-M).